A 293-amino-acid chain; its full sequence is ATP synthase gamma chain (293 aa).

Belongs to the ATPase gamma chain family. F-type ATPases have 2 components, CF(1) - the catalytic core - and CF(0) - the membrane proton channel. CF(1) has five subunits: alpha(3), beta(3), gamma(1), delta(1), epsilon(1). CF(0) has three main subunits: a, b and c.

It localises to the cell membrane. Its function is as follows. Produces ATP from ADP in the presence of a proton gradient across the membrane. The gamma chain is believed to be important in regulating ATPase activity and the flow of protons through the CF(0) complex. This Methylacidiphilum infernorum (isolate V4) (Methylokorus infernorum (strain V4)) protein is ATP synthase gamma chain.